The chain runs to 485 residues: GTPase Obg (485 aa).

Residues P2–V159 form the Obg domain. The OBG-type G domain occupies A160–R341. Residues G166–S173, F191–V195, D212–G215, N292–D295, and S322–V324 each bind GTP. Mg(2+)-binding residues include S173 and T193. The 79-residue stretch at P359–P437 folds into the OCT domain. The tract at residues T439 to E485 is disordered. Over residues T452–K468 the composition is skewed to basic and acidic residues.

Belongs to the TRAFAC class OBG-HflX-like GTPase superfamily. OBG GTPase family. Monomer. Requires Mg(2+) as cofactor.

It localises to the cytoplasm. Functionally, an essential GTPase which binds GTP, GDP and possibly (p)ppGpp with moderate affinity, with high nucleotide exchange rates and a fairly low GTP hydrolysis rate. Plays a role in control of the cell cycle, stress response, ribosome biogenesis and in those bacteria that undergo differentiation, in morphogenesis control. This Mycobacterium sp. (strain MCS) protein is GTPase Obg.